Reading from the N-terminus, the 241-residue chain is ATP synthase subunit a (241 aa).

The next 5 helical transmembrane spans lie at 23 to 43, 83 to 103, 113 to 133, 188 to 208, and 209 to 229; these read VSFT…AAFF, YFPY…LGML, IAVT…IGFA, VLAG…FAVV, and LGVT…FTIL.

The protein belongs to the ATPase A chain family. In terms of assembly, F-type ATPases have 2 components, CF(1) - the catalytic core - and CF(0) - the membrane proton channel. CF(1) has five subunits: alpha(3), beta(3), gamma(1), delta(1), epsilon(1). CF(0) has four main subunits: a, b, b' and c.

Its subcellular location is the cell inner membrane. Its function is as follows. Key component of the proton channel; it plays a direct role in the translocation of protons across the membrane. The polypeptide is ATP synthase subunit a (Rhodospirillum rubrum (strain ATCC 11170 / ATH 1.1.1 / DSM 467 / LMG 4362 / NCIMB 8255 / S1)).